Consider the following 92-residue polypeptide: Small ribosomal subunit protein uS19c (92 aa).

This sequence belongs to the universal ribosomal protein uS19 family.

It is found in the plastid. The protein localises to the chloroplast. Protein S19 forms a complex with S13 that binds strongly to the 16S ribosomal RNA. This chain is Small ribosomal subunit protein uS19c, found in Nicotiana tomentosiformis (Tobacco).